The sequence spans 193 residues: uncharacterized protein (193 aa).

Helical transmembrane passes span 5 to 25, 63 to 83, and 90 to 110; these read LILLIVVLFLTPYLIALFIIF, IFILIVEIIALCSGFYILINI, and ILTFSLIFLFIAIIYDKLTPA.

Its subcellular location is the cell membrane. This is an uncharacterized protein from Methanocaldococcus jannaschii (strain ATCC 43067 / DSM 2661 / JAL-1 / JCM 10045 / NBRC 100440) (Methanococcus jannaschii).